The sequence spans 964 residues: MYKALIFTVLLVSAVAPVRSLDPPLNDDVLGLIVFKADLRDPEQKLASWNEDDYTPCSWNGVKCHPRTNRVTELNLDGFSLSGRIGRGLLQLQFLHKLSLSNNNLTGIINPNMLLSLVNLKVVDLSSNGLSGSLPDEFFRQCGSLRVLSLAKNKLTGKIPVSISSCSSLAALNLSSNGFSGSMPLGIWSLNTLRSLDLSRNELEGEFPEKIDRLNNLRALDLSRNRLSGPIPSEIGSCMLLKTIDLSENSLSGSLPNTFQQLSLCYSLNLGKNALEGEVPKWIGEMRSLETLDLSMNKFSGQVPDSIGNLLALKVLNFSGNGLIGSLPVSTANCINLLALDLSGNSLTGKLPMWLFQDGSRDVSALKNDNSTGGIKKIQVLDLSHNAFSGEIGAGLGDLRDLEGLHLSRNSLTGPIPSTIGELKHLSVLDVSHNQLNGMIPRETGGAVSLEELRLENNLLEGNIPSSIKNCSSLRSLILSHNKLLGSIPPELAKLTRLEEVDLSFNELAGTLPKQLANLGYLHTFNISHNHLFGELPAGGIFNGLSPSSVSGNPGICGAVVNKSCPAISPKPIVLNPNATFDPYNGEIVPPGAGHKRILLSISSLIAISAAAAIVVGVIAITVLNLRVRASTVSRSAVPLTFSGGDDFSRSPTTDSNSGKLVMFSGEPDFSTGTHALLNKDCELGRGGFGAVYRTVIRDGYPVAIKKLTVSSLVKSQDEFEREVKKLGKLRHSNLVKLEGYYWTTSLQLLIYEFLSGGSLYKQLHEAPGGNSSLSWNDRFNIILGTAKCLAYLHQSNIIHYNIKSSNVLLDSSGEPKVGDYGLARLLPMLDRYVLSSKIQSALGYMAPEFACRTVKITEKCDVYGFGVLVLEVVTGKKPVEYMEDDVVVLCDMVREALEDGRADECIDPRLQGKFPVEEAVAVIKLGLICTSQVPSSRPHMGEAVNILRMIRCPSGSSDELGSS.

An N-terminal signal peptide occupies residues 1-20; it reads MYKALIFTVLLVSAVAPVRS. Residues 21–603 are Extracellular-facing; that stretch reads LDPPLNDDVL…GHKRILLSIS (583 aa). 11 LRR repeats span residues 92–116, 117–141, 143–166, 168–190, 191–214, 215–238, 240–261, 263–286, 287–310, 312–334, and 335–358; these read LQFL…MLLS, LVNL…FFRQ, GSLR…ISSC, SLAA…IWSL, NTLR…IDRL, NNLR…IGSC, LLKT…TFQQ, SLCY…IGEM, RSLE…IGNL, ALKV…TANC, and INLL…LFQD. Asparagine 104 carries an N-linked (GlcNAc...) asparagine glycan. A glycan (N-linked (GlcNAc...) asparagine) is linked at asparagine 173. N-linked (GlcNAc...) asparagine glycosylation occurs at asparagine 317. Asparagine 370 is a glycosylation site (N-linked (GlcNAc...) asparagine). LRR repeat units follow at residues 375–399, 400–423, 425–447, 448–471, 472–495, 496–519, and 521–544; these read IKKI…LGDL, RDLE…IGEL, HLSV…TGGA, VSLE…IKNC, SSLR…LAKL, TRLE…LANL, and YLHT…IFNG. The N-linked (GlcNAc...) asparagine glycan is linked to asparagine 470. 3 N-linked (GlcNAc...) asparagine glycosylation sites follow: asparagine 526, asparagine 562, and asparagine 578. The helical transmembrane segment at 604-624 threads the bilayer; that stretch reads SLIAISAAAAIVVGVIAITVL. Over 625–964 the chain is Cytoplasmic; the sequence is NLRVRASTVS…SGSSDELGSS (340 aa). One can recognise a Protein kinase domain in the interval 678-951; the sequence is LNKDCELGRG…GEAVNILRMI (274 aa). ATP contacts are provided by residues 684 to 692 and lysine 706; that span reads LGRGGFGAV.

This sequence belongs to the protein kinase superfamily. Ser/Thr protein kinase family. As to quaternary structure, interacts with IRKI. Autophosphorylated. In terms of tissue distribution, highly expressed in root tips, shoot apices and developing flowers.

The protein resides in the cell membrane. The catalysed reaction is L-seryl-[protein] + ATP = O-phospho-L-seryl-[protein] + ADP + H(+). It carries out the reaction L-threonyl-[protein] + ATP = O-phospho-L-threonyl-[protein] + ADP + H(+). The polypeptide is Probable LRR receptor-like serine/threonine-protein kinase IRK (Arabidopsis thaliana (Mouse-ear cress)).